We begin with the raw amino-acid sequence, 703 residues long: Elongation factor G (703 aa).

The 281-residue stretch at 7 to 287 folds into the tr-type G domain; it reads KFTRNIGIAA…AVMRYLPSPA (281 aa). GTP-binding positions include 16 to 23, 84 to 88, and 138 to 141; these read AHIDAGKT, DTPGH, and NKMD.

This sequence belongs to the TRAFAC class translation factor GTPase superfamily. Classic translation factor GTPase family. EF-G/EF-2 subfamily.

It is found in the cytoplasm. Its function is as follows. Catalyzes the GTP-dependent ribosomal translocation step during translation elongation. During this step, the ribosome changes from the pre-translocational (PRE) to the post-translocational (POST) state as the newly formed A-site-bound peptidyl-tRNA and P-site-bound deacylated tRNA move to the P and E sites, respectively. Catalyzes the coordinated movement of the two tRNA molecules, the mRNA and conformational changes in the ribosome. The sequence is that of Elongation factor G from Christiangramia forsetii (strain DSM 17595 / CGMCC 1.15422 / KT0803) (Gramella forsetii).